A 971-amino-acid polypeptide reads, in one-letter code: MVGSGSHTPYDISNSPSDVNVQPATQLNSTLVEDDDVDNQLFEEAQVTETGFRSPSASDNSCAYCGIDSAKCVIKCNSCKKWFCNTKNGTSSSHIVNHLVLSHHNVVSLHPDSDLGDTVLECYNCGRKNVFLLGFVSAKSEAVVVLLCRIPCAQTKNANWDTDQWQPLIEDRQLLSWVAEQPTEEEKLKARLITPSQISKLEAKWRSNKDATINDIDAPEEQEAIPPLLLRYQDAYEYQRSYGPLIKLEADYDKQLKESQALEHISVSWSLALNNRHLASFTLSTFESNELKVAIGDEMILWYSGMQHPDWEGRGYIVRLPNSFQDTFTLELKPSKTPPPTHLTTGFTAEFIWKGTSYDRMQDALKKFAIDKKSISGYLYYKILGHQVVDISFDVPLPKEFSIPNFAQLNSSQSNAVSHVLQRPLSLIQGPPGTGKTVTSATIVYHLSKIHKDRILVCAPSNVAVDHLAAKLRDLGLKVVRLTAKSREDVESSVSNLALHNLVGRGAKGELKNLLKLKDEVGELSASDTKRFVKLVRKTEAEILNKADVVCCTCVGAGDKRLDTKFRTVLIDESTQASEPECLIPIVKGAKQVILVGDHQQLGPVILERKAADAGLKQSLFERLISLGHVPIRLEVQYRMNPYLSEFPSNMFYEGSLQNGVTIEQRTVPNSKFPWPIRGIPMMFWANYGREEISANGTSFLNRIEAMNCERIITKLFRDGVKPEQIGVITPYEGQRAYILQYMQMNGSLDKDLYIKVEVASVDAFQGREKDYIILSCVRANEQQAIGFLRDPRRLNVGLTRAKYGLVILGNPRSLARNTLWNHLLIHFREKGCLVEGTLDNLQLCTVQLVRPQPRKTERPMNAQFNVESEMGDFPKFQDFDAQSMVSFSGQIGDFGNAFVDNTELSSYINNEYWNFENFKSAFSQKQNRNEIDDRNLYQEEASHLNSNFARELQREEQKHELSKDFSNLGI.

Residues 1-22 are disordered; it reads MVGSGSHTPYDISNSPSDVNVQ. One can recognise a Upf1 CH-rich domain in the interval 54–208; it reads SPSASDNSCA…SKLEAKWRSN (155 aa). Phosphoserine is present on serine 56. 12 residues coordinate Zn(2+): cysteine 62, cysteine 65, cysteine 76, cysteine 79, cysteine 84, histidine 94, histidine 98, histidine 104, cysteine 122, cysteine 125, cysteine 148, and cysteine 152. The interval 62 to 94 is C3H; the sequence is CAYCGIDSAKCVIKCNSCKKWFCNTKNGTSSSH. Residues 76-104 are CC/SHH/C; that stretch reads CNSCKKWFCNTKNGTSSSHIVNHLVLSHH. The interval 122–152 is C4; the sequence is CYNCGRKNVFLLGFVSAKSEAVVVLLCRIPC. Residues glutamine 413, 433 to 437, glutamine 601, tyrosine 638, and glutamate 769 each bind ATP; that span reads GTGKT. The residue at position 869 (serine 869) is a Phosphoserine.

The protein belongs to the DNA2/NAM7 helicase family.

The protein localises to the cytoplasm. It catalyses the reaction ATP + H2O = ADP + phosphate + H(+). Its function is as follows. RNA-dependent helicase required for nonsense-mediated decay (NMD) of aberrant mRNAs containing premature stop codons and modulates the expression level of normal mRNAs. Also capable of unwinding double-stranded DNA and translocating on single-stranded DNA. The protein is ATP-dependent helicase NAM7 (NAM7) of Saccharomyces cerevisiae (strain ATCC 204508 / S288c) (Baker's yeast).